We begin with the raw amino-acid sequence, 152 residues long: UPF0266 membrane protein YobD (152 aa).

The next 3 membrane-spanning stretches (helical) occupy residues 6–26 (LVLI…QFIM), 45–65 (VDSV…VTSH), and 67–87 (AQMT…IFWI).

This sequence belongs to the UPF0266 family.

The protein resides in the cell inner membrane. The sequence is that of UPF0266 membrane protein YobD from Salmonella paratyphi A (strain ATCC 9150 / SARB42).